A 273-amino-acid chain; its full sequence is MSLYRDSAVVLRVQKLGEADRIITLLTRRYGKVRAVAKGVRRTTSRFGARVEPFCHIDVQLYTGRTLDVITQVQTLDAFGAHIVDDYQRYTSACAVLETVDRLAAEEGEPVLRLYLLATGALRALAGRERDSSLVLDAFLLRAMSFAGWAPALDECARCNARGPHAAFNVAAGGAVCAECRPAGSVRPSAATLPLLEALLHGDWAVAEAATTPVRREGSGLIAAHLQWHMERQLRSLPLVERSEWKVPEIIRERAAELGATQDPVASPAGEDG.

Belongs to the RecO family.

Functionally, involved in DNA repair and RecF pathway recombination. The sequence is that of DNA repair protein RecO from Saccharopolyspora erythraea (strain ATCC 11635 / DSM 40517 / JCM 4748 / NBRC 13426 / NCIMB 8594 / NRRL 2338).